We begin with the raw amino-acid sequence, 218 residues long: MTDGDYDYLIKLLALGDSGVGKTTFLYRYTDNKFNPKFITTVGIDFREKRVAYNTQGPNGPTGKAFKVHLQLWDTAGQERFRSLTTAFFRDAMGFLLMFDLTSQQSFLNVRNWMSQLQANAYCENPDIVLIGNKADLPDQREVNERQARDLAEKYSIPYFETSAATGQNVEKAVETLLDLIMKRMEQCVEKTHIPDTVNGSSSGKLDGEKSAEKKCAC.

Position 2 is an N-acetylthreonine (Thr2). 16-24 provides a ligand contact to GTP; it reads GDSGVGKTT. The Effector region motif lies at 38–46; it reads FITTVGIDF. GTP-binding positions include 74-78, 133-136, and 163-165; these read DTAGQ, NKAD, and SAA. A disulfide bridge connects residues Cys123 and Cys188. The segment at 193-218 is disordered; it reads HIPDTVNGSSSGKLDGEKSAEKKCAC. Residues 206–218 show a composition bias toward basic and acidic residues; it reads LDGEKSAEKKCAC. 2 S-geranylgeranyl cysteine lipidation sites follow: Cys216 and Cys218. Cys218 carries the cysteine methyl ester modification.

This sequence belongs to the small GTPase superfamily. Rab family. As to quaternary structure, interacts with SYTL2, SYTL4, MYRIP and MLPH. Interacts with RPH3A and RPH3A. Interacts (GDP-bound form preferentially) with DENND10. In terms of tissue distribution, expressed at an extraordinary high level (0.1% of total protein) in urothelium.

The protein localises to the membrane. It is found in the late endosome. The catalysed reaction is GTP + H2O = GDP + phosphate + H(+). Its activity is regulated as follows. Regulated by guanine nucleotide exchange factors (GEFs) which promote the exchange of bound GDP for free GTP, GTPase activating proteins (GAPs) which increase the GTP hydrolysis activity, and GDP dissociation inhibitors which inhibit the dissociation of the nucleotide from the GTPase. Activated by GEFs such as DENND10. In terms of biological role, small GTPase which cycles between active GTP-bound and inactive GDP-bound states. In its active state, binds to a variety of effector proteins to regulate homeostasis of late endocytic pathway, including endosomal positioning, maturation and secretion. Plays a role in NTRK2/TRKB axonal anterograde transport by facilitating the association of NTRK2/TRKB with KLC1. May be involved in targeting uroplakins to urothelial apical membranes. This Bos taurus (Bovine) protein is Ras-related protein Rab-27B (RAB27B).